A 395-amino-acid polypeptide reads, in one-letter code: Yellow-related salivary protein M35 (395 aa).

A signal peptide spans Met-1–Ser-18.

This sequence belongs to the major royal jelly protein family. Salivary gland (at protein level).

The protein localises to the secreted. Its function is as follows. Probably modulates blood feeding of sand flies on vertebrate species by binding and sequestering different mediators involved in the host response. Functions as a chemoattractant for host neutrophils; likely acts through a G-protein-coupled receptor and effect is dependent on calcium influx and phosphatidylinositol 3-kinases (PI3K) activity. Functionally, (Microbial infection) Probably enhances infection caused by Leishmania species in the host through augmentation of host neutrophil recruitment into the skin. The polypeptide is Yellow-related salivary protein M35 (Phlebotomus duboscqi (Sandfly)).